Consider the following 537-residue polypeptide: Ceramide kinase (537 aa).

The segment at 1-115 (MGATGAAEPL…CPEEQLCHLW (115 aa)) is essential for enzyme activity. Residues 1–125 (MGATGAAEPL…LQTLREMLEK (125 aa)) are required for binding to sulfatide and phosphoinositides. A DAGKc domain is found at 128 to 278 (SRPKHLLVFI…MDVSSVHHNS (151 aa)). ATP contacts are provided by residues 138–140 (NPF) and 170–174 (TEHAN). Residue 195-198 (GGDG) participates in substrate binding. Residue Asp197 is the Proton donor/acceptor of the active site. ATP is bound by residues Glu202, 239–241 (GST), Arg304, and Arg310. Phosphoserine is present on residues Ser340 and Ser408. 502-504 (DGE) serves as a coordination point for ATP.

It depends on Ca(2+) as a cofactor. Mg(2+) serves as cofactor. As to expression, high level expression in heart, brain, skeletal muscle, kidney and liver; moderate in peripheral blood leukocytes and thymus; very low in spleen, small intestine, placenta and lung.

The protein localises to the cytoplasm. The protein resides in the cell membrane. The enzyme catalyses an N-acylsphing-4-enine + ATP = an N-acylsphing-4-enine 1-phosphate + ADP + H(+). The catalysed reaction is N-(hexanoyl)sphing-4-enine + ATP = N-hexanoylsphing-4-enine 1-phosphate + ADP + H(+). It catalyses the reaction N-(acetyl)-sphing-4-enine + ATP = N-(acetyl)-sphing-4-enine-1-phosphate + ADP + H(+). It carries out the reaction N-hexadecanoylsphing-4-enine + ATP = N-(hexadecanoyl)-sphing-4-enine-1-phosphate + ADP + H(+). The enzyme catalyses N-hexanoyl-(4R)-hydroxysphinganine + ATP = N-hexanoyl-(4R)-hydroxysphinganine-1-phosphate + ADP + H(+). With respect to regulation, inhibited by sulfatide. Inhibited by sphinganine, sphingenine, and N,N-Dimethylsphingosine (DMS). Cardiolipin at 0.1 uM significantly increases activity, whereas at concentrations &gt;1 uM has an inhibitory effect. In terms of biological role, catalyzes specifically the phosphorylation of ceramide to form ceramide 1-phosphate. Acts efficiently on natural and analog ceramides (C6, C8, C16 ceramides, and C8-dihydroceramide), to a lesser extent on C2-ceramide and C6-dihydroceramide, but not on other lipids, such as various sphingosines. Shows a greater preference for D-erythro isomer of ceramides. Binds phosphoinositides. The sequence is that of Ceramide kinase (CERK) from Homo sapiens (Human).